A 325-amino-acid polypeptide reads, in one-letter code: Putative S-adenosyl-L-methionine-dependent methyltransferase MT0917 (325 aa).

S-adenosyl-L-methionine contacts are provided by residues aspartate 126 and 155–156; that span reads DL.

Belongs to the UPF0677 family.

Exhibits S-adenosyl-L-methionine-dependent methyltransferase activity. The polypeptide is Putative S-adenosyl-L-methionine-dependent methyltransferase MT0917 (Mycobacterium tuberculosis (strain CDC 1551 / Oshkosh)).